The primary structure comprises 666 residues: MAQGAVIHVAPEEPTHAVCVVGTATPLDIRGSAPRGSTSFSITASPEVVVDVIHGPPSKKSTTGASKWPLDPKLEVTLQMKAASSRIDDQKVRISYYGPKTSSTQALLYLTGVELSLSADVTRTGKAKPAPAGKDQSTWTWGPDGHGAILLVNCDKEDPKSSGMDFEDDKVLDNKDLQDMSPMTLSTKTPKDFFDKYQLVLQVPKAKMNKVRVFRATRGKLPSRYKVVLGPQQFSHRLELLGGQHSTDFYVEGLAFPDADFKGLIPLTISLLDKSNPELPEALVFQDTVMFRVAPWIMTPNTQPPQEVYVCRFSDNEDFLKSLATFTKKAKCKLTVCPEEENQDDQWMQDEMEIGYIQAPHKTLPVVFDSPRDRGLKDFPVKRVMGPNFGYVTRGLYRAEVTGLDAFGNLEVSPPVTVRGKEYPLGRILIGSSGYSSSESRDMHQILQDFLGAQQVQAPVRLFSDWLFVGHVDEFLSFVPARGKQGFRLLLSSPRACYQMFQELQTEGHGEASLFEGLKRKRQTISDILSSQKLRDQNAYVESCIDWNREVLKRELGLTEGDIIDIPQLFRIVGNSRGNPKAEAFFPNMVNMLVLGKHLGIPKPFGPIINGRCCLEEKVCSLLEPLGLHCTFINDFYSYHMYHGEVHCGTNVRRKPFAFKWWHMVP.

Ca(2+) contacts are provided by Asn153, Asp155, Asp165, Asp168, Asp176, and Asp179. Citrulline occurs at positions 212 and 218. A Ca(2+)-binding site is contributed by Gln349. The active site involves Asp350. Ca(2+) contacts are provided by Glu351, Glu353, Asp369, and Ser370. 3 positions are modified to citrulline: Arg372, Arg374, and Arg383. Arg374 serves as a coordination point for substrate. Phe407, Leu410, and Glu411 together coordinate Ca(2+). Residues His471, Asp473, and Cys648 contribute to the active site.

Belongs to the protein arginine deiminase family. The cofactor is Ca(2+). Autocitrullination at Arg-372 and Arg-374 inactivates the enzyme. Epidermis.

The protein resides in the cytoplasm. Its subcellular location is the nucleus. The protein localises to the cytoplasmic granule. It catalyses the reaction L-arginyl-[protein] + H2O = L-citrullyl-[protein] + NH4(+). Functionally, catalyzes the citrullination/deimination of arginine residues of proteins such as histones, thereby playing a key role in histone code and regulation of stem cell maintenance. Citrullinates histone H1 at 'Arg-54' (to form H1R54ci), histone H3 at 'Arg-2', 'Arg-8', 'Arg-17' and/or 'Arg-26' (to form H3R2ci, H3R8ci, H3R17ci, H3R26ci, respectively) and histone H4 at 'Arg-3' (to form H4R3ci). Acts as a key regulator of stem cell maintenance by mediating citrullination of histone H1: citrullination of 'Arg-54' of histone H1 (H1R54ci) results in H1 displacement from chromatin and global chromatin decondensation, thereby promoting pluripotency and stem cell maintenance. Promotes profound chromatin decondensation during the innate immune response to infection in neutrophils by mediating formation of H1R54ci. Required for the formation of neutrophil extracellular traps (NETs); NETs are mainly composed of DNA fibers and are released by neutrophils to bind pathogens during inflammation. Citrullination of histone H3 prevents their methylation by CARM1 and HRMT1L2/PRMT1 and represses transcription. Citrullinates EP300/P300 at 'Arg-2142', which favors its interaction with NCOA2/GRIP1. In Rattus norvegicus (Rat), this protein is Protein-arginine deiminase type-4 (Padi4).